Reading from the N-terminus, the 338-residue chain is Taste receptor type 2 member 39 (338 aa).

Residues 1–30 (MLGRCFPPNTKEKQQLRMIKLCDPAESELS) lie on the Extracellular side of the membrane. A helical membrane pass occupies residues 31 to 51 (PFLITLTLAVLLAEYLTGIIA). Over 52–74 (NGFITAIHAAECVQNKSVSTSGR) the chain is Cytoplasmic. The chain crosses the membrane as a helical span at residues 75-95 (ILVFLSVSRIALQSLMMLEIT). Residues 96–116 (ISSTSLSFYSEDTVYYAFKIS) are Extracellular-facing. A helical transmembrane segment spans residues 117–137 (FIFLNFCSLWFAAWLSFFYFV). Residues 138–156 (KIANFSYPLFLKLRWRISG) lie on the Cytoplasmic side of the membrane. The chain crosses the membrane as a helical span at residues 157–177 (LIPWLLWLSVFISFSHSMFCI). At 178-205 (NICTGYCDNSFPIHSSNSTEKTYFSEIS) the chain is on the extracellular side. N-linked (GlcNAc...) asparagine glycosylation occurs at asparagine 194. The chain crosses the membrane as a helical span at residues 206–226 (VVSLAFFFNLGIVIPLIMFIL). The Cytoplasmic segment spans residues 227–262 (AAILLILSLKRHTLYMXSNATGSKDPSMEAHIGAIK). The helical transmembrane segment at 263-283 (ATSYFLILYIFNAVALFIYLS) threads the bilayer. Over 284-291 (NMFDINSL) the chain is Extracellular. The helical transmembrane segment at 292–312 (WNTLCQIIMAAYPASHSILLI) threads the bilayer. Topologically, residues 313–338 (KDNPGLRRAWKQLQHRLHLYPKEWTL) are cytoplasmic.

This sequence belongs to the G-protein coupled receptor T2R family.

It localises to the membrane. In terms of biological role, receptor that may play a role in the perception of bitterness and is gustducin-linked. May play a role in sensing the chemical composition of the gastrointestinal content. The activity of this receptor may stimulate alpha gustducin, mediate PLC-beta-2 activation and lead to the gating of TRPM5. This Papio hamadryas (Hamadryas baboon) protein is Taste receptor type 2 member 39 (TAS2R39).